A 412-amino-acid chain; its full sequence is Isovaleryl-CoA dehydrogenase, mitochondrial (412 aa).

The transit peptide at 1–25 directs the protein to the mitochondrion; the sequence is MHKLFVARSVKSALFRIKNHQKPQF. Residues 154 to 163 and 187 to 189 contribute to the FAD site; these read LAMSEPNAGS and WCT. Residue Ser163 coordinates substrate. Residues 209 to 210, Tyr264, and 271 to 274 contribute to the substrate site; these read SK and DLER. Glu273 functions as the Proton acceptor in the catalytic mechanism. Residues Arg299, Gln310, and 367–371 contribute to the FAD site; that span reads QCLGG. Substrate is bound at residue 394–395; the sequence is AG. Residue 396 to 398 participates in FAD binding; sequence TSE.

The protein belongs to the acyl-CoA dehydrogenase family. In terms of assembly, homotetramer. FAD serves as cofactor. Expressed in flowers and tubers.

It localises to the mitochondrion. It catalyses the reaction 3-methylbutanoyl-CoA + oxidized [electron-transfer flavoprotein] + H(+) = 3-methylbut-2-enoyl-CoA + reduced [electron-transfer flavoprotein]. The protein operates within amino-acid degradation; L-leucine degradation; (S)-3-hydroxy-3-methylglutaryl-CoA from 3-isovaleryl-CoA: step 1/3. Its function is as follows. Involved in the catabolism of amino acids. Uses isovaleryl-CoA as substrate. Minor activity detected with 2-methylpalmitoyl-CoA or 2-methylbutanoyl-CoA, but no activity with short- and medium-straight chain acyl-CoA esters or with 2-methylhexanoyl-CoA. This is Isovaleryl-CoA dehydrogenase, mitochondrial (IVD) from Solanum tuberosum (Potato).